The following is a 123-amino-acid chain: Ribulose bisphosphate carboxylase small subunit, chloroplastic 1 (123 aa).

Methionine derivative is present on methionine 1.

The protein belongs to the RuBisCO small chain family. As to quaternary structure, heterohexadecamer of 8 large and 8 small subunits.

It is found in the plastid. The protein localises to the chloroplast. Functionally, ruBisCO catalyzes two reactions: the carboxylation of D-ribulose 1,5-bisphosphate, the primary event in carbon dioxide fixation, as well as the oxidative fragmentation of the pentose substrate. Both reactions occur simultaneously and in competition at the same active site. Although the small subunit is not catalytic it is essential for maximal activity. In Spinacia oleracea (Spinach), this protein is Ribulose bisphosphate carboxylase small subunit, chloroplastic 1.